The following is an 86-amino-acid chain: V-type proton ATPase subunit e (86 aa).

A helical transmembrane segment spans residues 1–21 (MGILIPLVSVSAFWAIIGFGG). Topologically, residues 22-32 (PWIVPKGPNRG) are cytoplasmic. Residues 33-53 (IIQLMIIMTAVCCWMFWIMVF) form a helical membrane-spanning segment. At 54 to 86 (LHQLNPLIGPQINVKTIRWISEKWGDAPNVINN) the chain is on the lumenal side.

It belongs to the V-ATPase e1/e2 subunit family. V-ATPase is a heteromultimeric enzyme made up of two complexes: the ATP-hydrolytic V1 complex and the proton translocation V0 complex. The V1 complex consists of three catalytic AB heterodimers that form a heterohexamer, three peripheral stalks each consisting of EG heterodimers, one central rotor including subunits D and F, and the regulatory subunits C and H. The proton translocation complex V0 consists of the proton transport subunit a, a ring of proteolipid subunits c9c'', rotary subunit d, subunits e and f, and the accessory subunits vah-19/Ac45 and vah-20/PRR.

It is found in the apical cell membrane. Subunit of the V0 complex of vacuolar(H+)-ATPase (V-ATPase), a multisubunit enzyme composed of a peripheral complex (V1) that hydrolyzes ATP and a membrane integral complex (V0) that translocates protons. V-ATPase is responsible for acidifying and maintaining the pH of intracellular compartments and in some cell types, is targeted to the plasma membrane, where it is responsible for acidifying the extracellular environment. During embryonic development, the V-ATPase is required to repress fusion of epidermal cells probably by negatively regulating eff-1-mediated cell fusion. In Caenorhabditis elegans, this protein is V-type proton ATPase subunit e.